Reading from the N-terminus, the 528-residue chain is Apolipoprotein N-acyltransferase (528 aa).

5 helical membrane passes run 8 to 28 (IMLLAGWRRALLAIASGAVGA), 69 to 89 (AFWIGWLFGFGYFVAGLWWLG), 99 to 119 (FAWALPLAVLGLPAVLAVFYG), 178 to 198 (VLGLFGVSALAVFVFAAPALL), and 203 to 223 (GAKLGLALAGILFCGHLGYGA). Residues 241-490 (VQPNIDQAAK…EGVENATFTL (250 aa)) enclose the CN hydrolase domain. The Proton acceptor role is filled by E285. K349 is an active-site residue. Residue C402 is the Nucleophile of the active site.

This sequence belongs to the CN hydrolase family. Apolipoprotein N-acyltransferase subfamily.

The protein localises to the cell inner membrane. It catalyses the reaction N-terminal S-1,2-diacyl-sn-glyceryl-L-cysteinyl-[lipoprotein] + a glycerophospholipid = N-acyl-S-1,2-diacyl-sn-glyceryl-L-cysteinyl-[lipoprotein] + a 2-acyl-sn-glycero-3-phospholipid + H(+). Its pathway is protein modification; lipoprotein biosynthesis (N-acyl transfer). In terms of biological role, catalyzes the phospholipid dependent N-acylation of the N-terminal cysteine of apolipoprotein, the last step in lipoprotein maturation. The protein is Apolipoprotein N-acyltransferase of Allorhizobium ampelinum (strain ATCC BAA-846 / DSM 112012 / S4) (Agrobacterium vitis (strain S4)).